Reading from the N-terminus, the 305-residue chain is Ribosomal RNA small subunit methyltransferase H (305 aa).

Residues 49–51 (GGH), Asp-68, Phe-100, Asp-116, and Gln-123 each bind S-adenosyl-L-methionine.

The protein belongs to the methyltransferase superfamily. RsmH family.

It localises to the cytoplasm. The enzyme catalyses cytidine(1402) in 16S rRNA + S-adenosyl-L-methionine = N(4)-methylcytidine(1402) in 16S rRNA + S-adenosyl-L-homocysteine + H(+). Its function is as follows. Specifically methylates the N4 position of cytidine in position 1402 (C1402) of 16S rRNA. This is Ribosomal RNA small subunit methyltransferase H from Synechocystis sp. (strain ATCC 27184 / PCC 6803 / Kazusa).